Reading from the N-terminus, the 159-residue chain is Eukaryotic translation initiation factor 5A (159 aa).

The residue at position 51 (Lys-51) is a Hypusine.

This sequence belongs to the eIF-5A family. In terms of processing, lys-51 undergoes hypusination, a unique post-translational modification that consists in the addition of a butylamino group from spermidine to lysine side chain, leading to the formation of the unusual amino acid hypusine. eIF-5As are the only known proteins to undergo this modification, which is essential for their function.

The protein resides in the cytoplasm. In terms of biological role, translation factor that promotes translation elongation and termination, particularly upon ribosome stalling at specific amino acid sequence contexts. Binds between the exit (E) and peptidyl (P) site of the ribosome and promotes rescue of stalled ribosome: specifically required for efficient translation of polyproline-containing peptides as well as other motifs that stall the ribosome. Acts as a ribosome quality control (RQC) cofactor by joining the RQC complex to facilitate peptidyl transfer during CAT tailing step. Functions as a regulator of autophagy. This is Eukaryotic translation initiation factor 5A from Drosophila melanogaster (Fruit fly).